A 104-amino-acid polypeptide reads, in one-letter code: Small ribosomal subunit protein uS10 (104 aa).

This sequence belongs to the universal ribosomal protein uS10 family. Part of the 30S ribosomal subunit.

Involved in the binding of tRNA to the ribosomes. The chain is Small ribosomal subunit protein uS10 from Thermoplasma acidophilum (strain ATCC 25905 / DSM 1728 / JCM 9062 / NBRC 15155 / AMRC-C165).